The chain runs to 621 residues: MFDLKEKLRTLPEKPGVYMMRNDKNEIIYVGKAISLKNRVRQYFQSSKNHPPKVKAMVSHIVTFEYIVTDTELEALILECNLIKENRPKYNVLLRDDKTYPYIKITTNEEYPRILKTRKVIKDKAKYFGPYTNIGALNETLDVIHTIYPIRTCNKNIERMIANKERPCLNYHIKKCIGPCTGLVTKEEYHQMIHDIILFLDGKEDELVRKIEEKMKAAAISMDFENAARYRDQIIALNNIVEKQKIVSVAEQDQDVIAMAKNEGNTWIQVFFIRKGKLVQREHFILKDTEDDSNQEIIASFLKQFYSGATFVPKEILIEESVEDLNVLEEWLSGKRGNKVSIKVPQKGDKKELLDMVKKNALMTMEQATTVIQLEKEKTEDTLIELAQLLDLEEVPYRIESYDISNIQGVESVGSMVVFEGGKSKNKDYRRFKIKTVKGPNDYASLEEIITRRFKRGLEETQDIIEQSLEVSEGKFAIFPDLIMVDGGFGQVTSVKKALHSLNLNIPVCGMIKDDRHRTKGLVYEGEELSIEKTSHLFRLITKIQDEVHRFAITYHRSLRKKTTLQSILEEIPGVGEARRKALMIHFGSIDKIKNATVEELLEVQGMNRKVAENIVEYLNK.

In terms of domain architecture, GIY-YIG spans 13-92 (EKPGVYMMRN…IKENRPKYNV (80 aa)). One can recognise a UVR domain in the interval 205 to 240 (DELVRKIEEKMKAAAISMDFENAARYRDQIIALNNI).

This sequence belongs to the UvrC family. In terms of assembly, interacts with UvrB in an incision complex.

It is found in the cytoplasm. The UvrABC repair system catalyzes the recognition and processing of DNA lesions. UvrC both incises the 5' and 3' sides of the lesion. The N-terminal half is responsible for the 3' incision and the C-terminal half is responsible for the 5' incision. This chain is UvrABC system protein C, found in Alkaliphilus oremlandii (strain OhILAs) (Clostridium oremlandii (strain OhILAs)).